The following is an 82-amino-acid chain: Turripeptide IX-23 (82 aa).

Residues 1-23 form the signal peptide; sequence MMAKLMITVMMVLLLSLQQGADG. Residues 24 to 50 constitute a propeptide that is removed on maturation; the sequence is RSERWRKNQMAASSIMRNLITARIDPP. 3 cysteine pairs are disulfide-bonded: C53–C68, C58–C72, and C64–C79.

The protein belongs to the Pg turripeptide superfamily. Expressed by the venom duct.

Its subcellular location is the secreted. The polypeptide is Turripeptide IX-23 (Gemmula speciosa (Splendid gem-turris)).